We begin with the raw amino-acid sequence, 138 residues long: Putative pre-16S rRNA nuclease (138 aa).

It belongs to the YqgF nuclease family.

It localises to the cytoplasm. Functionally, could be a nuclease involved in processing of the 5'-end of pre-16S rRNA. The protein is Putative pre-16S rRNA nuclease of Geobacillus sp. (strain WCH70).